Consider the following 203-residue polypeptide: Large ribosomal subunit protein bL25 (203 aa).

It belongs to the bacterial ribosomal protein bL25 family. CTC subfamily. As to quaternary structure, part of the 50S ribosomal subunit; part of the 5S rRNA/L5/L18/L25 subcomplex. Contacts the 5S rRNA. Binds to the 5S rRNA independently of L5 and L18.

This is one of the proteins that binds to the 5S RNA in the ribosome where it forms part of the central protuberance. The protein is Large ribosomal subunit protein bL25 of Chlorobium phaeovibrioides (strain DSM 265 / 1930) (Prosthecochloris vibrioformis (strain DSM 265)).